A 460-amino-acid chain; its full sequence is EPD1-interacting receptor-like cytoplasmic serine/threonine-protein kinase 5D (460 aa).

In terms of domain architecture, Protein kinase spans 83–364 (FSSANFLGEG…DVVNILEPLL (282 aa)). ATP-binding positions include 89 to 97 (LGEGGFGPV) and Lys-118. A phosphotyrosine mark is found at Tyr-163 and Tyr-165. The active-site Proton acceptor is the Asp-213.

The protein belongs to the protein kinase superfamily. Ser/Thr protein kinase family. Interacts with the V.dahliae elicitor EPD1 (AC G2WWH6). In terms of processing, phosphorylated at Tyr-163 and Tyr-165 in the presence of pathogen-associated molecular patterns (PAMPs); this triggers the expression of pathogenesis-related genes. As to expression, mostly expressed in roots and, to a lesser extent, in leaves.

The protein localises to the cell membrane. The enzyme catalyses L-seryl-[protein] + ATP = O-phospho-L-seryl-[protein] + ADP + H(+). It carries out the reaction L-threonyl-[protein] + ATP = O-phospho-L-threonyl-[protein] + ADP + H(+). Required for pathogen-associated molecular pattern (PAMP, e.g. chitin and flg22)-triggered immunity (PTI) involving reactive oxygen species (ROS) accumulation and triggering plant defense, including defense-related gene expression (e.g. PR1 and LOX). Ensures specific recognition of the EPD1 effector of Verticillium dahliae, resulting in a hypersensitive response known as effector-triggered immunity (ETI), characterized by the activation of programmed cell death to limit infection by the pathogen. Priming plants with the incompatible pathogen V.dahliae leads to an increased resistance to compatible pathogens, as a result of systemic acquired resistance (SAR). This Gossypium barbadense (Sea Island cotton) protein is EPD1-interacting receptor-like cytoplasmic serine/threonine-protein kinase 5D.